A 428-amino-acid chain; its full sequence is MAENDVDNELLDYEEDEVETAAGGDGSEAPAKKDVKGSYVSIHSSGFRDFLLKPELLRAIVDCGFEHPSEVQHECIPQAILGMDVLCQAKSGMGKTAVFVLATLQQLEPVTGQVSVLVMCHTRELAFQISKEYERFSKYMPNVKVAVFFGGLSIKKDEEVLKKNCPHIVVGTPGRILALARNKSLNLKHIKHFILDECDKMLEQLDMRRDVQEIFRMTPHEKQVMMFSATLSKEIRPVCRKFMQDPMEIFVDDETKLTLHGLQQYYVKLKDNEKNRKLFDLLDVLEFNQVVIFVKSVQRCIALAQLLVEQNFPAIAIHRGMPQEERLSRYQQFKDFQRRILVATNLFGRGMDIERVNIAFNYDMPEDSDTYLHRVARAGRFGTKGLAITFVSDENDAKILNDVQDRFEVNISELPDEIDISSYIEQTR.

The segment covering 1–19 (MAENDVDNELLDYEEDEVE) has biased composition (acidic residues). Residues 1-32 (MAENDVDNELLDYEEDEVETAAGGDGSEAPAK) are disordered. An N-acetylalanine modification is found at alanine 2. Lysine 36 carries the N6-acetyllysine; alternate modification. A Glycyl lysine isopeptide (Lys-Gly) (interchain with G-Cter in SUMO2); alternate cross-link involves residue lysine 36. Phosphoserine occurs at positions 38 and 41. The Q motif motif lies at 45 to 73 (SGFRDFLLKPELLRAIVDCGFEHPSEVQH). Positions 76–249 (IPQAILGMDV…RKFMQDPMEI (174 aa)) constitute a Helicase ATP-binding domain. 89–96 (AKSGMGKT) provides a ligand contact to ATP. At threonine 172 the chain carries Phosphothreonine. The DECD box motif lies at 196–199 (DECD). The 162-residue stretch at 261–422 (GLQQYYVKLK…ELPDEIDISS (162 aa)) folds into the Helicase C-terminal domain.

It belongs to the DEAD box helicase family. DECD subfamily. Homodimer, and heterodimer with DDX39A. DDX39B interacts with the THO subcomplex to form the THO-DDX39B complex which multimerizes into a 28-subunit tetrameric assembly. Component of the transcription/export (TREX) complex at least composed of ALYREF/THOC4, DDX39B, SARNP/CIP29, CHTOP and the THO subcomplex; in the complex interacts with THOC2. THOC1-THOC2-THOC3-DDX39B subcomplex is sufficient for the interaction with export factor NXF1-NXT1. TREX seems to have a dynamic structure involving ATP-dependent remodeling. Within the TREX complex bridges ALYREF/THOC4 and the THO subcomplex, and, in a ATP-dependent manner, ALYREF/THOC4 and SARNP/CIP29. Component of the spliceosome. Interacts directly with U2AF2. Interacts with RBM8A, RNPS1 and SRRM1, FYTTD1/UIF, THOC1, MX1 and POLDIP3. Interacts with LUZP4. Interacts with SARNP/CIP29 (via the C-terminal domain); the interaction is direct and facilitates RNA binding of DDX39B.

Its subcellular location is the nucleus. It localises to the nucleus speckle. The protein localises to the cytoplasm. It carries out the reaction ATP + H2O = ADP + phosphate + H(+). Its function is as follows. Involved in nuclear export of spliced and unspliced mRNA. Component of the TREX complex which is thought to couple mRNA transcription, processing and nuclear export, and specifically associates with spliced mRNA and not with unspliced pre-mRNA. The TREX complex is recruited to spliced mRNAs by a transcription-independent mechanism, binds to mRNA upstream of the exon-junction complex (EJC) and is recruited in a splicing- and cap-dependent manner to a region near the 5' end of the mRNA where it functions in mRNA export to the cytoplasm via the TAP/NXF1 pathway. The THOC1-THOC2-THOC3 core complex alone is sufficient to promote ATPase activity of DDX39B; in the complex THOC2 is the only component that directly interacts with DDX39B. Associates with SARNP/CIP29, which facilitates RNA binding of DDX39B and likely plays a role in mRNA export. May undergo several rounds of ATP hydrolysis during assembly of TREX to drive subsequent loading of components such as ALYREF/THOC4 and CHTOP onto mRNA. Also associates with pre-mRNA independent of ALYREF/THOC4. Involved in the nuclear export of intronless mRNA; the ATP-bound form is proposed to recruit export adapter ALYREF/THOC4 to intronless mRNA; its ATPase activity is cooperatively stimulated by RNA and ALYREF/THOC4 and ATP hydrolysis is thought to trigger the dissociation from RNA to allow the association of ALYREF/THOC4 and the NXF1-NXT1 heterodimer. Involved in transcription elongation and genome stability. In terms of biological role, splice factor that is required for the first ATP-dependent step in spliceosome assembly and for the interaction of U2 snRNP with the branchpoint. Has both RNA-stimulated ATP binding/hydrolysis activity and ATP-dependent RNA unwinding activity. Even with the stimulation of RNA, the ATPase activity is weak. Can only hydrolyze ATP but not other NTPs. The RNA stimulation of ATPase activity does not have a strong preference for the sequence and length of the RNA. However, ssRNA stimulates the ATPase activity much more strongly than dsRNA. Can unwind 5' or 3' overhangs or blunt end RNA duplexes in vitro. The ATPase and helicase activities are not influenced by U2AF2; the effect of ALYREF/THOC4 is reported conflictingly. In Canis lupus familiaris (Dog), this protein is Spliceosome RNA helicase DDX39B (DDX39B).